Reading from the N-terminus, the 615-residue chain is Alpha-1,3-galactosidase B (615 aa).

Residues 1 to 23 (MRTFLSLKTCLLSALLLCVNSIA) form the signal peptide. PbH1 repeat units follow at residues 282 to 313 (SKNI…HFMG), 423 to 445 (TPDA…LVST), 446 to 467 (PGKV…LIAG), 478 to 500 (VKDV…YQFC), 520 to 541 (HRNI…LFAR), and 543 to 573 (VNGL…TLEA).

It belongs to the glycosyl hydrolase 110 family. B subfamily.

The catalysed reaction is Hydrolysis of terminal, non-reducing branched (1-&gt;3)-alpha-D-galactosidic residues, producing free D-galactose.. It carries out the reaction Hydrolysis of terminal, non-reducing linear (1-&gt;3)-alpha-D-galactosidic residues, producing free D-galactose.. The enzyme catalyses Hydrolysis of terminal, non-reducing alpha-D-galactose residues in alpha-D-galactosides, including galactose oligosaccharides, galactomannans and galactolipids.. Alpha-galactosidase. Removes both branched alpha-1,3-linked galactose residues of blood group B antigens and linear alpha-1,3-linked galactose structures. This Bacteroides thetaiotaomicron (strain ATCC 29148 / DSM 2079 / JCM 5827 / CCUG 10774 / NCTC 10582 / VPI-5482 / E50) protein is Alpha-1,3-galactosidase B (glaB).